The sequence spans 153 residues: Cytochrome c-type biogenesis protein CcmE (153 aa).

Residues 1 to 8 (MTPVQRRR) lie on the Cytoplasmic side of the membrane. Residues 9 to 29 (LVWVLLALLASGLATALVAMA) traverse the membrane as a helical; Signal-anchor for type II membrane protein segment. Over 30–153 (LERNIAYLYT…DVPVTAPEVR (124 aa)) the chain is Periplasmic. Residues H123 and Y127 each coordinate heme.

It belongs to the CcmE/CycJ family.

It localises to the cell inner membrane. Heme chaperone required for the biogenesis of c-type cytochromes. Transiently binds heme delivered by CcmC and transfers the heme to apo-cytochromes in a process facilitated by CcmF and CcmH. This chain is Cytochrome c-type biogenesis protein CcmE, found in Stenotrophomonas maltophilia (strain R551-3).